The primary structure comprises 100 residues: Urease subunit gamma (100 aa).

The protein belongs to the urease gamma subunit family. In terms of assembly, heterotrimer of UreA (gamma), UreB (beta) and UreC (alpha) subunits. Three heterotrimers associate to form the active enzyme.

It is found in the cytoplasm. It catalyses the reaction urea + 2 H2O + H(+) = hydrogencarbonate + 2 NH4(+). It functions in the pathway nitrogen metabolism; urea degradation; CO(2) and NH(3) from urea (urease route): step 1/1. The chain is Urease subunit gamma from Synechococcus sp. (strain WH7805).